The primary structure comprises 359 residues: Phosphoserine aminotransferase (359 aa).

L-glutamate is bound at residue Arg-41. Pyridoxal 5'-phosphate-binding positions include 75-76 (AS), Trp-99, Thr-147, Asp-166, and Gln-189. N6-(pyridoxal phosphate)lysine is present on Lys-190. 231-232 (NT) is a binding site for pyridoxal 5'-phosphate.

It belongs to the class-V pyridoxal-phosphate-dependent aminotransferase family. SerC subfamily. Homodimer. Pyridoxal 5'-phosphate serves as cofactor.

It is found in the cytoplasm. The enzyme catalyses O-phospho-L-serine + 2-oxoglutarate = 3-phosphooxypyruvate + L-glutamate. The catalysed reaction is 4-(phosphooxy)-L-threonine + 2-oxoglutarate = (R)-3-hydroxy-2-oxo-4-phosphooxybutanoate + L-glutamate. Its pathway is amino-acid biosynthesis; L-serine biosynthesis; L-serine from 3-phospho-D-glycerate: step 2/3. It participates in cofactor biosynthesis; pyridoxine 5'-phosphate biosynthesis; pyridoxine 5'-phosphate from D-erythrose 4-phosphate: step 3/5. Functionally, catalyzes the reversible conversion of 3-phosphohydroxypyruvate to phosphoserine and of 3-hydroxy-2-oxo-4-phosphonooxybutanoate to phosphohydroxythreonine. This Azobacteroides pseudotrichonymphae genomovar. CFP2 protein is Phosphoserine aminotransferase.